Here is a 278-residue protein sequence, read N- to C-terminus: Proteolipid protein DM beta (278 aa).

Helical transmembrane passes span 30 to 46 (LIAT…FCGC), 84 to 100 (VIYG…ILLM), 130 to 146 (FIML…GVTA), and 213 to 229 (LFIV…IAMV).

This sequence belongs to the myelin proteolipid protein family.

The protein resides in the membrane. The chain is Proteolipid protein DM beta from Squalus acanthias (Spiny dogfish).